The primary structure comprises 485 residues: ATP synthase subunit beta, cyanelle (485 aa).

An ATP-binding site is contributed by 162-169 (GGAGVGKT).

Belongs to the ATPase alpha/beta chains family. In terms of assembly, F-type ATPases have 2 components, CF(1) - the catalytic core - and CF(0) - the membrane proton channel. CF(1) has five subunits: alpha(3), beta(3), gamma(1), delta(1), epsilon(1). CF(0) has four main subunits: a(1), b(1), b'(1) and c(9-12).

The protein resides in the plastid. It localises to the cyanelle thylakoid membrane. It catalyses the reaction ATP + H2O + 4 H(+)(in) = ADP + phosphate + 5 H(+)(out). In terms of biological role, produces ATP from ADP in the presence of a proton gradient across the membrane. The catalytic sites are hosted primarily by the beta subunits. The protein is ATP synthase subunit beta, cyanelle of Cyanophora paradoxa.